We begin with the raw amino-acid sequence, 252 residues long: Triosephosphate isomerase (252 aa).

10–12 lines the substrate pocket; it reads NWK. Residue His96 is the Electrophile of the active site. The active-site Proton acceptor is Glu168. Residues Gly174, Ser213, and 234–235 each bind substrate; that span reads GG.

The protein belongs to the triosephosphate isomerase family. Homodimer.

The protein localises to the cytoplasm. It catalyses the reaction D-glyceraldehyde 3-phosphate = dihydroxyacetone phosphate. The protein operates within carbohydrate biosynthesis; gluconeogenesis. It participates in carbohydrate degradation; glycolysis; D-glyceraldehyde 3-phosphate from glycerone phosphate: step 1/1. Its function is as follows. Involved in the gluconeogenesis. Catalyzes stereospecifically the conversion of dihydroxyacetone phosphate (DHAP) to D-glyceraldehyde-3-phosphate (G3P). In Idiomarina loihiensis (strain ATCC BAA-735 / DSM 15497 / L2-TR), this protein is Triosephosphate isomerase.